The following is a 600-amino-acid chain: Novobiocin biosynthesis protein H (600 aa).

Positions 505–526 (GGKTDRAGLPDPVKATQPAGLG) are disordered. The Carrier domain maps to 526–600 (GPRTPAEKVL…QLAAIATLEE (75 aa)). Ser-561 is subject to O-(pantetheine 4'-phosphoryl)serine.

It belongs to the ATP-dependent AMP-binding enzyme family.

It participates in antibiotic biosynthesis; novobiocin biosynthesis. Functionally, together with NovI, involved in the formation of a beta-OH-Tyr intermediate in the novobiocin biosynthesis pathway, an aminocoumarin family antibiotic that targets bacterial DNA gyrases. The ATP-dependent AMP-binding region activates L-Tyr as L-tyrosyl-AMP and then transfers the L-tyrosyl group to the acyl carrier domain through thioester formation to form a tyrosyl-S intermediate that is covalently tethered to NovH (L-Tyr-S-NovH). This is Novobiocin biosynthesis protein H (novH) from Streptomyces niveus (Streptomyces spheroides).